The sequence spans 51 residues: Large ribosomal subunit protein eL39 (51 aa).

The disordered stretch occupies residues 1-22 (MAAQKSFRIKQKMAKAKKQNRP). The segment covering 7–20 (FRIKQKMAKAKKQN) has biased composition (basic residues).

Belongs to the eukaryotic ribosomal protein eL39 family. Component of the large ribosomal subunit (LSU). Mature yeast ribosomes consist of a small (40S) and a large (60S) subunit. The 40S small subunit contains 1 molecule of ribosomal RNA (18S rRNA) and 33 different proteins (encoded by 57 genes). The large 60S subunit contains 3 rRNA molecules (25S, 5.8S and 5S rRNA) and 46 different proteins (encoded by 81 genes). eL39 interacts with YIH1.

The protein localises to the cytoplasm. Functionally, component of the ribosome, a large ribonucleoprotein complex responsible for the synthesis of proteins in the cell. The small ribosomal subunit (SSU) binds messenger RNAs (mRNAs) and translates the encoded message by selecting cognate aminoacyl-transfer RNA (tRNA) molecules. The large subunit (LSU) contains the ribosomal catalytic site termed the peptidyl transferase center (PTC), which catalyzes the formation of peptide bonds, thereby polymerizing the amino acids delivered by tRNAs into a polypeptide chain. The nascent polypeptides leave the ribosome through a tunnel in the LSU and interact with protein factors that function in enzymatic processing, targeting, and the membrane insertion of nascent chains at the exit of the ribosomal tunnel. This is Large ribosomal subunit protein eL39 from Saccharomyces cerevisiae (strain ATCC 204508 / S288c) (Baker's yeast).